The sequence spans 442 residues: Tubby-related protein 3 (442 aa).

The segment at 23-68 (MRQAKLDYQRLLLEKRQRKKRLEPFMVQPNPEARLRRAKPRASDEQ) is required for association with the IFT complex A (IFT-A). The disordered stretch occupies residues 101–177 (PSVSSSVVEE…TSGSATAAQP (77 aa)). Positions 145-162 (GISQSACLERPNSASSQN) are enriched in polar residues. Positions 163–175 (STDTGTSGSATAA) are enriched in low complexity.

Belongs to the TUB family. As to quaternary structure, associates with the IFT complex A (IFT-A). Interacts with SIRT1. As to expression, expressed at high levels in testis, ovaries, thyroid, and spinal cord.

It is found in the nucleus. It localises to the cell membrane. Its subcellular location is the cell projection. The protein resides in the cilium. The protein localises to the cytoplasm. It is found in the secreted. Its function is as follows. Negative regulator of the Shh signaling transduction pathway: recruited to primary cilia via association with the IFT complex A (IFT-A) and is required for recruitment of G protein-coupled receptor GPR161 to cilia, a promoter of PKA-dependent basal repression machinery in Shh signaling. Binds to phosphorylated inositide (phosphoinositide) lipids. Both IFT-A- and phosphoinositide-binding properties are required to regulate ciliary G protein-coupled receptor trafficking. During adipogenesis, regulates ciliary trafficking of FFAR4 in preadipocytes. The protein is Tubby-related protein 3 of Homo sapiens (Human).